The primary structure comprises 410 residues: FBD-associated F-box protein At5g38590 (410 aa).

An F-box domain is found at 1 to 47 (MDKINGLPDDLLVKILSYVPTDIAVSTSILSKRWEFLWMWLPNLDYT). The region spanning 335–385 (GWNQPSSVPECLLSSLQIFKWPQYLGRPEDRDIAVYILKNARHLKKTTILA) is the FBD domain.

This Arabidopsis thaliana (Mouse-ear cress) protein is FBD-associated F-box protein At5g38590.